A 326-amino-acid chain; its full sequence is NAD-dependent protein deacylase SIR5 (326 aa).

Residues 1–26 constitute a mitochondrion transit peptide; it reads MRLLRPTPRLSSIFSSKTATSNLRFF. The Deacetylase sirtuin-type domain maps to 28 to 324; that stretch reads AMAPHNDVGA…IGKLETDKKE (297 aa). 53–72 contributes to the NAD(+) binding site; sequence GAGLSASSGLPTFRGAGGLW. Substrate contacts are provided by Tyr-97 and Arg-100. His-151 serves as the catalytic Proton acceptor. The Zn(2+) site is built by Cys-159, Cys-162, Cys-211, and Cys-214.

It belongs to the sirtuin family. Class I subfamily. As to quaternary structure, interacts with LAT1; the interaction is direct. Zn(2+) serves as cofactor.

It localises to the mitochondrion. The protein localises to the cytoplasm. The protein resides in the cytosol. Its subcellular location is the nucleus. It is found in the chromosome. It catalyses the reaction N(6)-acetyl-L-lysyl-[protein] + NAD(+) + H2O = 2''-O-acetyl-ADP-D-ribose + nicotinamide + L-lysyl-[protein]. The enzyme catalyses N(6)-(2E)-butenoyl-L-lysyl-[protein] + H2O = (2E)-2-butenoate + L-lysyl-[protein]. Functionally, NAD-dependent protein-lysine deacylase that decrotonylates the PDC (pyruvate dehydrogenase complex) subunit LAT1 at 'Lys-148' to inhibit PDC activity and consequently ATP production. Also decrotonylates histone H3 crotonylated at 'Lys-18' (H3K18cr), to repress the expression of genes involved in aerobic respiration. May also act as a NAD-dependent deacetylase. Does not mediate desuccinylation, demalonylation, or deglutarylation of LAT1. The sequence is that of NAD-dependent protein deacylase SIR5 from Fusarium oxysporum f. sp. lycopersici (strain 4287 / CBS 123668 / FGSC 9935 / NRRL 34936) (Fusarium vascular wilt of tomato).